Reading from the N-terminus, the 499-residue chain is Glycerol kinase (499 aa).

Threonine 17 is an ADP binding site. ATP is bound by residues threonine 17, threonine 18, and serine 19. Threonine 17 provides a ligand contact to sn-glycerol 3-phosphate. Arginine 21 lines the ADP pocket. Sn-glycerol 3-phosphate-binding residues include arginine 87, glutamate 88, tyrosine 139, and aspartate 243. Residues arginine 87, glutamate 88, tyrosine 139, aspartate 243, and glutamine 244 each contribute to the glycerol site. The ADP site is built by threonine 265 and glycine 308. ATP contacts are provided by threonine 265, glycine 308, glutamine 312, and glycine 409. ADP-binding residues include glycine 409 and asparagine 413.

It belongs to the FGGY kinase family.

The catalysed reaction is glycerol + ATP = sn-glycerol 3-phosphate + ADP + H(+). It functions in the pathway polyol metabolism; glycerol degradation via glycerol kinase pathway; sn-glycerol 3-phosphate from glycerol: step 1/1. Inhibited by fructose 1,6-bisphosphate (FBP). Functionally, key enzyme in the regulation of glycerol uptake and metabolism. Catalyzes the phosphorylation of glycerol to yield sn-glycerol 3-phosphate. This is Glycerol kinase from Pseudomonas putida (strain ATCC 700007 / DSM 6899 / JCM 31910 / BCRC 17059 / LMG 24140 / F1).